Here is a 354-residue protein sequence, read N- to C-terminus: Protein-glutamate methylesterase/protein-glutamine glutaminase (354 aa).

Positions 6 to 123 (RVLIVDDSAV…SQSLETLSAA (118 aa)) constitute a Response regulatory domain. At D57 the chain carries 4-aspartylphosphate. The 193-residue stretch at 159–351 (ARTTHQLLAV…GDLLKQLQTR (193 aa)) folds into the CheB-type methylesterase domain. Active-site residues include S171, H197, and D293.

It belongs to the CheB family. Post-translationally, phosphorylated by CheA. Phosphorylation of the N-terminal regulatory domain activates the methylesterase activity.

Its subcellular location is the cytoplasm. The catalysed reaction is [protein]-L-glutamate 5-O-methyl ester + H2O = L-glutamyl-[protein] + methanol + H(+). It carries out the reaction L-glutaminyl-[protein] + H2O = L-glutamyl-[protein] + NH4(+). Functionally, involved in chemotaxis. Part of a chemotaxis signal transduction system that modulates chemotaxis in response to various stimuli. Catalyzes the demethylation of specific methylglutamate residues introduced into the chemoreceptors (methyl-accepting chemotaxis proteins or MCP) by CheR. Also mediates the irreversible deamidation of specific glutamine residues to glutamic acid. The chain is Protein-glutamate methylesterase/protein-glutamine glutaminase from Bdellovibrio bacteriovorus (strain ATCC 15356 / DSM 50701 / NCIMB 9529 / HD100).